A 403-amino-acid chain; its full sequence is NADH-quinone oxidoreductase subunit D (403 aa).

Belongs to the complex I 49 kDa subunit family. NDH-1 is composed of 14 different subunits. Subunits NuoB, C, D, E, F, and G constitute the peripheral sector of the complex.

It is found in the cell membrane. The enzyme catalyses a quinone + NADH + 5 H(+)(in) = a quinol + NAD(+) + 4 H(+)(out). Functionally, NDH-1 shuttles electrons from NADH, via FMN and iron-sulfur (Fe-S) centers, to quinones in the respiratory chain. The immediate electron acceptor for the enzyme in this species is believed to be a menaquinone. Couples the redox reaction to proton translocation (for every two electrons transferred, four hydrogen ions are translocated across the cytoplasmic membrane), and thus conserves the redox energy in a proton gradient. The sequence is that of NADH-quinone oxidoreductase subunit D from Amoebophilus asiaticus (strain 5a2).